The primary structure comprises 232 residues: Putative N-acetylmannosamine-6-phosphate 2-epimerase (232 aa).

The protein belongs to the NanE family.

It catalyses the reaction an N-acyl-D-glucosamine 6-phosphate = an N-acyl-D-mannosamine 6-phosphate. It functions in the pathway amino-sugar metabolism; N-acetylneuraminate degradation; D-fructose 6-phosphate from N-acetylneuraminate: step 3/5. In terms of biological role, converts N-acetylmannosamine-6-phosphate (ManNAc-6-P) to N-acetylglucosamine-6-phosphate (GlcNAc-6-P). The chain is Putative N-acetylmannosamine-6-phosphate 2-epimerase from Borreliella afzelii (strain PKo) (Borrelia afzelii).